The chain runs to 137 residues: Histone H2B (137 aa).

Basic and acidic residues predominate over residues 1 to 10 (MPPKAADKKP). The interval 1–45 (MPPKAADKKPASKAPATASKAPEKKDAGKKTAASGDKKKRTKTRK) is disordered. An N6-acetyllysine; alternate mark is found at lysine 8 and lysine 9. Glycyl lysine isopeptide (Lys-Gly) (interchain with G-Cter in SUMO); alternate cross-links involve residues lysine 8 and lysine 9. Serine 12 carries the phosphoserine modification. Lysine 13 carries the post-translational modification N6-acetyllysine. Residue lysine 24 is modified to N6-acetyllysine; alternate. Lysine 24 participates in a covalent cross-link: Glycyl lysine isopeptide (Lys-Gly) (interchain with G-Cter in SUMO); alternate. A Glycyl lysine isopeptide (Lys-Gly) (interchain with G-Cter in SUMO) cross-link involves residue lysine 25. A Glycyl lysine isopeptide (Lys-Gly) (interchain with G-Cter in ubiquitin) cross-link involves residue lysine 131.

It belongs to the histone H2B family. As to quaternary structure, the nucleosome is a histone octamer containing two molecules each of H2A, H2B, H3 and H4 assembled in one H3-H4 heterotetramer and two H2A-H2B heterodimers. The octamer wraps approximately 147 bp of DNA. Post-translationally, monoubiquitinated by the UBC2-BRE1 complex to form H2BK123ub1. H2BK123ub1 gives a specific tag for epigenetic transcriptional activation and is also prerequisite for H3K4me and H3K79me formation. H2BK123ub1 also modulates the formation of double-strand breaks during meiosis and is a prerequisite for DNA-damage checkpoint activation. In terms of processing, phosphorylated by STE20 to form H2BS10ph during progression through meiotic prophase. May be correlated with chromosome condensation. Acetylated by GCN5 to form H2BK11ac and H2BK16ac. H2BK16ac can also be formed by ESA1. Acetylation of N-terminal lysines and particularly formation of H2BK11acK16ac has a positive effect on transcription. Post-translationally, sumoylation to form H2BK6su or H2BK7su, and probably also H2BK16su or H2BK17su, occurs preferentially near the telomeres and represses gene transcription.

The protein resides in the nucleus. Its subcellular location is the chromosome. Its function is as follows. Core component of nucleosome. Nucleosomes wrap and compact DNA into chromatin, limiting DNA accessibility to the cellular machineries which require DNA as a template. Histones thereby play a central role in transcription regulation, DNA repair, DNA replication and chromosomal stability. DNA accessibility is regulated via a complex set of post-translational modifications of histones, also called histone code, and nucleosome remodeling. This chain is Histone H2B (HTB1), found in Pyricularia oryzae (strain Y34) (Rice blast fungus).